A 206-amino-acid polypeptide reads, in one-letter code: Large ribosomal subunit protein mL40 (206 aa).

The N-terminal 46 residues, 1 to 46 (MATGVMLCAARALRPRSWIPGTCQAHVRHTHQRASLLAFWDLIPMR), are a transit peptide targeting the mitochondrion. The tract at residues 170-189 (PFEKEGPHYTPPISNYQAPE) is disordered.

This sequence belongs to the mitochondrion-specific ribosomal protein mL40 family. In terms of assembly, component of the mitochondrial ribosome large subunit (39S) which comprises a 16S rRNA and about 50 distinct proteins. As to expression, ubiquitous.

The protein resides in the mitochondrion. This Mus musculus (Mouse) protein is Large ribosomal subunit protein mL40 (Mrpl40).